We begin with the raw amino-acid sequence, 138 residues long: Acidic phospholipase A2 inhibitor chain HPD-1I (138 aa).

The first 16 residues, 1–16 (MRTLWIVAVCLIGVEG), serve as a signal peptide directing secretion. 7 disulfide bridges follow: cysteine 42–cysteine 131, cysteine 44–cysteine 60, cysteine 59–cysteine 111, cysteine 65–cysteine 138, cysteine 66–cysteine 104, cysteine 73–cysteine 97, and cysteine 91–cysteine 102.

In terms of assembly, heterodimer of an acidic and a basic chain; non-covalently linked. The basic chain is toxic and has phospholipase A2 activity (chain HDP-1P (AC Q1RP79) or HDP-2P (AC Q1RP78)) and the acidic chain is non-toxic and functions as its inhibitor (chain HPD-1I). Expressed by the venom gland.

It is found in the secreted. Functionally, heterodimer: slightly affects neuromuscular transmission acting presynaptically. It has a low catalytic activity, a low anticoagulant activity and weakly inhibits ADP-induced platelet aggregation. In terms of biological role, monomer: has no activity (neurotoxic, catalytic, anticoagulant and a ADP-induced platelet aggregation), but inhibits phospholipase A2. This chain is Acidic phospholipase A2 inhibitor chain HPD-1I, found in Vipera nikolskii (Nikolsky's adder).